The following is a 71-amino-acid chain: UPF0352 protein Asuc_0778 (71 aa).

Belongs to the UPF0352 family.

In Actinobacillus succinogenes (strain ATCC 55618 / DSM 22257 / CCUG 43843 / 130Z), this protein is UPF0352 protein Asuc_0778.